Consider the following 226-residue polypeptide: uncharacterized protein (226 aa).

Residues 75-226 (YTIRNVTKDD…KGWLRMVKRI (152 aa)) form the N-acetyltransferase domain.

It belongs to the acetyltransferase family.

This is an uncharacterized protein from Methanocaldococcus jannaschii (strain ATCC 43067 / DSM 2661 / JAL-1 / JCM 10045 / NBRC 100440) (Methanococcus jannaschii).